The primary structure comprises 361 residues: NudC domain-containing protein 3 (361 aa).

A compositionally biased stretch (basic and acidic residues) spans lysine 87–lysine 97. Positions lysine 87 to lysine 106 are disordered. Serine 146 is modified (phosphoserine). Positions alanine 185–leucine 277 constitute a CS domain. A phosphoserine mark is found at serine 340 and serine 355.

This Pongo abelii (Sumatran orangutan) protein is NudC domain-containing protein 3 (NUDCD3).